The primary structure comprises 233 residues: Putative glutathione peroxidase 7, chloroplastic (233 aa).

The N-terminal 69 residues, methionine 1–arginine 69, are a transit peptide targeting the chloroplast. The active site involves cysteine 108.

Belongs to the glutathione peroxidase family.

It localises to the plastid. It is found in the chloroplast. The enzyme catalyses 2 glutathione + H2O2 = glutathione disulfide + 2 H2O. Functionally, may constitute a glutathione peroxidase-like protective system against oxidative stresses. The polypeptide is Putative glutathione peroxidase 7, chloroplastic (GPX7) (Arabidopsis thaliana (Mouse-ear cress)).